Consider the following 254-residue polypeptide: 21S rRNA pseudouridine(2819) synthase (254 aa).

Asp71 is a catalytic residue.

Belongs to the pseudouridine synthase RluA family.

It is found in the mitochondrion. The enzyme catalyses uridine(2819) in 21S rRNA = pseudouridine(2819) in 21S rRNA. Pseudouridylate synthase responsible for the pseudouridine-2819 formation in mitochondrial 21S rRNA. May modulate the efficiency or the fidelity of the mitochondrial translation machinery. This is 21S rRNA pseudouridine(2819) synthase (PUS5) from Saccharomyces cerevisiae (strain ATCC 204508 / S288c) (Baker's yeast).